We begin with the raw amino-acid sequence, 68 residues long: MMLRLTSVSCFLLVIACLNLFQVVLTRRCFPPGTFCSRYLPCCSGRCCSGWCTRRCSPRYGKRATFQE.

The signal sequence occupies residues 1-26 (MMLRLTSVSCFLLVIACLNLFQVVLT). 4 cysteine pairs are disulfide-bonded: Cys-29/Cys-43, Cys-36/Cys-48, Cys-42/Cys-52, and Cys-47/Cys-56. Position 60 is a tyrosine amide (Tyr-60). The propeptide occupies 64-68 (ATFQE).

Belongs to the conotoxin I2 superfamily. In terms of tissue distribution, expressed by the venom duct.

Its subcellular location is the secreted. In Conus miles (Soldier cone), this protein is Conotoxin Mi11.1.